The chain runs to 306 residues: UDP-3-O-acyl-N-acetylglucosamine deacetylase (306 aa).

Zn(2+) is bound by residues His81, His241, and Asp245. His268 functions as the Proton donor in the catalytic mechanism.

The protein belongs to the LpxC family. It depends on Zn(2+) as a cofactor.

It catalyses the reaction a UDP-3-O-[(3R)-3-hydroxyacyl]-N-acetyl-alpha-D-glucosamine + H2O = a UDP-3-O-[(3R)-3-hydroxyacyl]-alpha-D-glucosamine + acetate. Its pathway is glycolipid biosynthesis; lipid IV(A) biosynthesis; lipid IV(A) from (3R)-3-hydroxytetradecanoyl-[acyl-carrier-protein] and UDP-N-acetyl-alpha-D-glucosamine: step 2/6. Its function is as follows. Catalyzes the hydrolysis of UDP-3-O-myristoyl-N-acetylglucosamine to form UDP-3-O-myristoylglucosamine and acetate, the committed step in lipid A biosynthesis. This is UDP-3-O-acyl-N-acetylglucosamine deacetylase from Hydrogenovibrio crunogenus (strain DSM 25203 / XCL-2) (Thiomicrospira crunogena).